The primary structure comprises 355 residues: Blue-sensitive opsin (355 aa).

Residues 1–41 (MKSRPQEFQEDFYIPIPLDTNNITALSPFLVPQDHLGGSGI) are Extracellular-facing. An N-linked (GlcNAc...) asparagine glycan is attached at N22. A helical transmembrane segment spans residues 42-66 (FMIMTVFMLFLFIGGTSINVLTIVC). The Cytoplasmic portion of the chain corresponds to 67 to 78 (TVQYKKLRSHLN). The helical transmembrane segment at 79–104 (YILVNLAISNLLVSTVGSFTAFVSFL) threads the bilayer. At 105–118 (NRYFIFGPTACKIE) the chain is on the extracellular side. A disulfide bridge links C115 with C192. The chain crosses the membrane as a helical span at residues 119-138 (GFVATLGGMVSLWSLSVVAF). At 139-157 (ERWLVICKPVGNFSFKGTH) the chain is on the cytoplasmic side. A helical membrane pass occupies residues 158–181 (AIIGCALTWFFALLASTPPLFGWS). Residues 182 to 207 (RYIPEGLQCSCGPDWYTTENKYNNES) lie on the Extracellular side of the membrane. N205 carries N-linked (GlcNAc...) asparagine glycosylation. The chain crosses the membrane as a helical span at residues 208–235 (YVMFLFCFCFGFPFTVILFCYGQLLFTL). Residues 236–257 (KSAAKAQADSASTQKAEREVTK) lie on the Cytoplasmic side of the membrane. A helical transmembrane segment spans residues 258 to 281 (MVVVMVMGFLVCWLPYASFALWVV). Topologically, residues 282 to 289 (FNRGQSFD) are extracellular. The helical transmembrane segment at 290 to 314 (LRLGTIPSCFSKASTVYNPVIYVFM) threads the bilayer. An N6-(retinylidene)lysine modification is found at K301. Over 315 to 355 (NKQFRSCMMKLIFCGKSPFGDDEEASSSSQVTQVSSVGPEK) the chain is Cytoplasmic. Positions 334 to 355 (GDDEEASSSSQVTQVSSVGPEK) are disordered. A compositionally biased stretch (low complexity) spans 340 to 355 (SSSSQVTQVSSVGPEK).

This sequence belongs to the G-protein coupled receptor 1 family. Opsin subfamily. In terms of processing, phosphorylated on some or all of the serine and threonine residues present in the C-terminal region. The color pigments are found in the cone photoreceptor cells.

The protein resides in the membrane. Its function is as follows. Visual pigments are the light-absorbing molecules that mediate vision. They consist of an apoprotein, opsin, covalently linked to cis-retinal. In Psalidodon fasciatus (Banded astyanax), this protein is Blue-sensitive opsin (B23).